We begin with the raw amino-acid sequence, 444 residues long: E3 ubiquitin-protein ligase RNFT2 (444 aa).

The Extracellular portion of the chain corresponds to 1-181; sequence MWLFTVNQVL…ILLAKLCFQH (181 aa). Disordered regions lie at residues 13–41 and 92–149; these read MQRRHSSNTDNIPPERNRSQALSSEASVD and PASR…PGTP. Positions 107 to 121 are enriched in basic residues; it reads YHHRQPHHHFHHGGH. Basic and acidic residues predominate over residues 131-140; the sequence is GGDHRGHSEE. The chain crosses the membrane as a helical span at residues 182 to 202; that stretch reads KLGIAVCIGMASTFAYANSTL. The Cytoplasmic portion of the chain corresponds to 203 to 214; that stretch reads REQVSLKEKRSV. Residues 215-235 traverse the membrane as a helical segment; it reads LVILWILAFLAGNTLYVLYTF. At 236–255 the chain is on the extracellular side; sequence SSQQLYNSLIFLKPNLEMLD. A helical membrane pass occupies residues 256–276; sequence FFDLLWIVGIADFVLKYITIA. The Cytoplasmic segment spans residues 277 to 329; sequence LKCLIVALPKIILAVKSKGKFYLVIEELSQLFRSLVPIQLWYKYIMGDDSSNS. A helical transmembrane segment spans residues 330–350; sequence YFLGGVLIVLYSLCKSFDICG. The Extracellular segment spans residues 351 to 444; sequence RVGGVRKALK…GATSAHFQVY (94 aa). The RING-type zinc-finger motif lies at 384–422; that stretch reads CAICQAEFREPLILLCQHVFCEECLCLWLDRERTCPLCR.

The protein localises to the membrane. Functionally, E3 ubiquitin-protein ligase that negatively regulates IL3-dependent cellular responses through IL3RA ubiquitination and degradation by the proteasome, having an anti-inflammatory effect. The sequence is that of E3 ubiquitin-protein ligase RNFT2 from Homo sapiens (Human).